Here is a 555-residue protein sequence, read N- to C-terminus: MSEAEARPTNFIRQIIDEDLASGKHTTVHTRFPPEPNGYLHIGHAKSICLNFGIAQDYQGQCNLRFDDTNPVKEDIEYVDSIKNDVEWLGFHWSGDIRYSSDYFDQLHAYAVELINKGLAYVDELTPEQIREYRGTLTAPGKNSPFRDRSVEENLALFEKMRTGGFEEGKACLRAKIDMASPFIVMRDPVLYRIKFAEHHQTGNKWCIYPMYDFTHCISDALEGITHSLCTLEFQDNRRLYDWVLDNITIPVHPRQYEFSRLNLEYTVMSKRKLNLLVTDKHVEGWDDPRMPTISGLRRRGYTAASIREFCKRIGVTKQDNTIEMASLESCIREDLNENAPRAMAVIDPVKLVIENYPQGESEMVTMPNHPNKPEMGSREVPFSGEIWIDRADFREEANKQYKRLVMGKEVRLRNAYVIKAERVEKDAEGNITTIFCTYDADTLSKDPADGRKVKGVIHWVSAAHALPIEIRLYDRLFSVPNPGAAEDFLSVINPESLVIKRGYGEPSLKAAVAGKAFQFEREGYFCLDSRYATADKLVFNRTVGLRDTWAKAGE.

A 'HIGH' region motif is present at residues Pro-34 to His-44. Residues Glu-35–Asn-37 and His-41–Ser-47 each bind ATP. The L-glutamine site is built by Asp-67 and Tyr-212. ATP-binding positions include Thr-231, Arg-261–Leu-262, and Met-269–Lys-271. Positions Val-268–Arg-272 match the 'KMSKS' region motif. The interaction with tRNA stretch occupies residues Thr-317 to Glu-324.

Belongs to the class-I aminoacyl-tRNA synthetase family. As to quaternary structure, monomer.

Its subcellular location is the cytoplasm. It catalyses the reaction tRNA(Gln) + L-glutamine + ATP = L-glutaminyl-tRNA(Gln) + AMP + diphosphate. In Salmonella newport (strain SL254), this protein is Glutamine--tRNA ligase.